We begin with the raw amino-acid sequence, 224 residues long: Metalloproteinase inhibitor 4 (224 aa).

The first 29 residues, 1–29, serve as a signal peptide directing secretion; sequence MPWSPLAALSWALVLRLLALLWPPGRGEA. A Zn(2+)-binding site is contributed by C30. Involved in metalloproteinase-binding regions lie at residues 30-33 and 99-100; these read CSCA and SS. 6 cysteine pairs are disulfide-bonded: C30-C102, C32-C131, C42-C156, C158-C205, C163-C168, and C176-C197. The NTR domain occupies 30–156; it reads CSCAPAHPQQ…SLNHHYHQNC (127 aa).

Belongs to the protease inhibitor I35 (TIMP) family. Expressed in brain, heart, ovary and skeletal muscle.

It localises to the secreted. Its function is as follows. Complexes with metalloproteinases (such as collagenases) and irreversibly inactivates them by binding to their catalytic zinc cofactor. This is Metalloproteinase inhibitor 4 (Timp4) from Mus musculus (Mouse).